A 686-amino-acid chain; its full sequence is MSKIRVHEYAKKHNISSKDLMTKLKEMNIEVSNHMTMLDDEVVNKLDNEYQAEKPSVADEFEVEEKVVRSKKNSNKKKKKGKGNEDKRQENFAGRQQTQTVETPDKITFSGSLTVGDLAKKLSKEPSEIIKKLFMLGIMATINQDLDKDTIELIANDYGIEVEEEVIVSETEFETFIDEQDDEENLKERPAVVTIMGHVDHGKTTLLDSIRNSKVTAGEAGGITQHIGAYQVEVNDKKITFLDTPGHAAFTTMRARGAQVTDITILVVAADDGVMPQTVEAINHAKAAGVPIIVAVNKMDKPAANPDRVMQELTEYELVPEAWGGDTIFVPISAIQGEGIDNLLEMILLVSEVEEYKANPNRYATGTVIEAQLDKGKGTIATLLVQNGTLRVGDPIVVGTTFGRVRAMVSDIGRRVKVAGPSTPVEITGLNEVPQAGDRFMAFADEKKARQIGESRAQEALLAQRGEKSKLSLEDLFQQIQEGDVKEINLIVKADVQGSVEAMAASLRKIDVEGVKVKIIHTGVGAITESDIILASASNAIVIGFNVRPDVNAKRTAELENVDIRLHRIIYKVIEEIEAAMQGMLDPEFEEKVIGQAEVRQTFKVTKVGTIAGCYVTDGKITRDSGVRIIRDGVVIYEGQLDTLKRFKDDVKEVAQNYECGITIEKYNDLKEGDIIEAYIMEEVKR.

Residues 54–105 (KPSVADEFEVEEKVVRSKKNSNKKKKKGKGNEDKRQENFAGRQQTQTVETPD) form a disordered region. The span at 69–81 (RSKKNSNKKKKKG) shows a compositional bias: basic residues. One can recognise a tr-type G domain in the interval 188 to 357 (ERPAVVTIMG…LLVSEVEEYK (170 aa)). The interval 197–204 (GHVDHGKT) is G1. 197-204 (GHVDHGKT) contributes to the GTP binding site. The interval 222 to 226 (GITQH) is G2. Residues 243 to 246 (DTPG) form a G3 region. GTP is bound by residues 243–247 (DTPGH) and 297–300 (NKMD). Residues 297–300 (NKMD) are G4. The interval 333-335 (SAI) is G5.

Belongs to the TRAFAC class translation factor GTPase superfamily. Classic translation factor GTPase family. IF-2 subfamily.

The protein localises to the cytoplasm. In terms of biological role, one of the essential components for the initiation of protein synthesis. Protects formylmethionyl-tRNA from spontaneous hydrolysis and promotes its binding to the 30S ribosomal subunits. Also involved in the hydrolysis of GTP during the formation of the 70S ribosomal complex. The protein is Translation initiation factor IF-2 of Bacillus cereus (strain AH187).